Here is a 205-residue protein sequence, read N- to C-terminus: Large ribosomal subunit protein uL4 (205 aa).

The interval 44–77 is disordered; that stretch reads KRQGTSKVKNRSAVRGGGKKPWRQKGTGRARQGS. A compositionally biased stretch (basic residues) spans 51–71; the sequence is VKNRSAVRGGGKKPWRQKGTG.

This sequence belongs to the universal ribosomal protein uL4 family. In terms of assembly, part of the 50S ribosomal subunit.

Functionally, one of the primary rRNA binding proteins, this protein initially binds near the 5'-end of the 23S rRNA. It is important during the early stages of 50S assembly. It makes multiple contacts with different domains of the 23S rRNA in the assembled 50S subunit and ribosome. Forms part of the polypeptide exit tunnel. The sequence is that of Large ribosomal subunit protein uL4 from Lactobacillus delbrueckii subsp. bulgaricus (strain ATCC 11842 / DSM 20081 / BCRC 10696 / JCM 1002 / NBRC 13953 / NCIMB 11778 / NCTC 12712 / WDCM 00102 / Lb 14).